Reading from the N-terminus, the 538-residue chain is MTDLNKVVKELEALGIYDVKEVVYNPSYEQLFEEETKPGLEGFEKGTLTTTGAVAVDTGIFTGRSPKDKYIVLDEKTKDTVWWTSETAKNDNKPMNQATWQSLKDLVTNQLSRKRLFVVDGFCGASEHDRIAVRIVTEVAWQAHFVKNMFIRPTEEQLKNFEPDFVVMNGSKVTNPNWKEQGLNSENFVAFNLTERIQLIGGTWYGGEMKKGMFSMMNYFLPLKGVGAMHCSANVGKDGDVAIFFGLSGTGKTTLSTDPKRELIGDDEHGWDDVGIFNFEGGCYAKTIHLSEENEPDIYHAIRRDALLENVVVRSDGSVDFDDGSKTENTRVSYPIYHIDNIVKPVSRAGHATKVIFLTADAFGVLPPVSKLTPEQTKYYFLSGFTAKLAGTERGITEPTPTFSACFGAAFLTLHPTQYAEVLVKRMQAAGAEAYLVNTGWNGTGKRISIKDTRGIIDAILDGSIEKAEMGELPIFNLAIPKALPGVDSAILDPRDTYADKAQWQSKAEDLAGRFVKNFVKYATNEEGKALIAAGPKA.

Positions 64, 205, and 211 each coordinate substrate. ATP is bound by residues lysine 211, histidine 230, and 246 to 254 (GLSGTGKTT). Positions 211 and 230 each coordinate Mn(2+). Aspartate 267 is a binding site for Mn(2+). Residues glutamate 295, arginine 331, 447–448 (RI), and threonine 453 contribute to the ATP site. Arginine 331 contributes to the substrate binding site.

Belongs to the phosphoenolpyruvate carboxykinase (ATP) family. In terms of assembly, monomer. It depends on Mn(2+) as a cofactor.

It localises to the cytoplasm. The enzyme catalyses oxaloacetate + ATP = phosphoenolpyruvate + ADP + CO2. The protein operates within carbohydrate biosynthesis; gluconeogenesis. Functionally, involved in the gluconeogenesis. Catalyzes the conversion of oxaloacetate (OAA) to phosphoenolpyruvate (PEP) through direct phosphoryl transfer between the nucleoside triphosphate and OAA. The sequence is that of Phosphoenolpyruvate carboxykinase (ATP) from Haemophilus influenzae (strain 86-028NP).